Consider the following 125-residue polypeptide: MPTINQLVRQGRTVEVVKSKSPAMENCPQRRGVCTRVYTTTPKKPNSALRKVAKVRLTNGFEVISYIGGEGHNLQEHSVVLVRGGRVKDLPGVRYHIVRGSLDLQGVKDRKQARSKYGAKKPKAK.

The residue at position 89 (aspartate 89) is a 3-methylthioaspartic acid.

Belongs to the universal ribosomal protein uS12 family. As to quaternary structure, part of the 30S ribosomal subunit. Contacts proteins S8 and S17. May interact with IF1 in the 30S initiation complex.

In terms of biological role, with S4 and S5 plays an important role in translational accuracy. Functionally, interacts with and stabilizes bases of the 16S rRNA that are involved in tRNA selection in the A site and with the mRNA backbone. Located at the interface of the 30S and 50S subunits, it traverses the body of the 30S subunit contacting proteins on the other side and probably holding the rRNA structure together. The combined cluster of proteins S8, S12 and S17 appears to hold together the shoulder and platform of the 30S subunit. The sequence is that of Small ribosomal subunit protein uS12 from Acidovorax sp. (strain JS42).